Reading from the N-terminus, the 312-residue chain is Pollen allergen Phl p 5.0101 (312 aa).

A signal peptide spans 1–25 (MAVHQYTVALFLAVALVAGPAASYA).

This sequence belongs to the Poa p IX/Phl p VI allergen family.

It is found in the secreted. This chain is Pollen allergen Phl p 5.0101, found in Phleum pratense (Common timothy).